We begin with the raw amino-acid sequence, 85 residues long: Small integral membrane protein 35 (85 aa).

A helical transmembrane segment spans residues 7–27 (ISTLGMILGVGLSLLLVSILG).

It localises to the membrane. The sequence is that of Small integral membrane protein 35 from Mus musculus (Mouse).